The chain runs to 238 residues: Urease subunit alpha (238 aa).

Residues 1–102 (MKLTPKELDK…LVTVHTPIEA (102 aa)) are urease gamma. Residues 103–238 (NGKLVPGELF…DDNYVKTIKE (136 aa)) are urease beta.

The protein in the N-terminal section; belongs to the urease gamma subunit family. It in the C-terminal section; belongs to the urease beta subunit family. In terms of assembly, heterohexamer of 3 UreA (alpha) and 3 UreB (beta) subunits. Four heterohexamers assemble to form a 16 nm dodecameric complex.

The catalysed reaction is urea + 2 H2O + H(+) = hydrogencarbonate + 2 NH4(+). It participates in nitrogen metabolism; urea degradation; CO(2) and NH(3) from urea (urease route): step 1/1. This is Urease subunit alpha from Helicobacter pylori (strain J99 / ATCC 700824) (Campylobacter pylori J99).